A 1358-amino-acid polypeptide reads, in one-letter code: DNA-directed RNA polymerase subunit beta (1358 aa).

The protein belongs to the RNA polymerase beta chain family. The RNAP catalytic core consists of 2 alpha, 1 beta, 1 beta' and 1 omega subunit. When a sigma factor is associated with the core the holoenzyme is formed, which can initiate transcription.

The catalysed reaction is RNA(n) + a ribonucleoside 5'-triphosphate = RNA(n+1) + diphosphate. DNA-dependent RNA polymerase catalyzes the transcription of DNA into RNA using the four ribonucleoside triphosphates as substrates. This is DNA-directed RNA polymerase subunit beta from Thioalkalivibrio sulfidiphilus (strain HL-EbGR7).